The following is a 459-amino-acid chain: Glutamyl-tRNA reductase (459 aa).

Residues 49–52, Ser-109, 114–116, and Gln-120 each bind substrate; these read TCNR and EQQ. Catalysis depends on Cys-50, which acts as the Nucleophile. 189 to 194 is an NADP(+) binding site; sequence GAGAMG.

This sequence belongs to the glutamyl-tRNA reductase family. Homodimer.

The catalysed reaction is (S)-4-amino-5-oxopentanoate + tRNA(Glu) + NADP(+) = L-glutamyl-tRNA(Glu) + NADPH + H(+). The protein operates within porphyrin-containing compound metabolism; protoporphyrin-IX biosynthesis; 5-aminolevulinate from L-glutamyl-tRNA(Glu): step 1/2. Catalyzes the NADPH-dependent reduction of glutamyl-tRNA(Glu) to glutamate 1-semialdehyde (GSA). The polypeptide is Glutamyl-tRNA reductase (Mycolicibacterium paratuberculosis (strain ATCC BAA-968 / K-10) (Mycobacterium paratuberculosis)).